The primary structure comprises 324 residues: Calmodulin-like protein 12 (324 aa).

6 EF-hand domains span residues 8 to 43 (DQITEYRESFRLFDKNGDGSITKKELGTMMRSIGEK), 44 to 79 (PTKADLQDLMNEADLDGDGTIDFPEFLCVMAKNQGH), 97 to 132 (DQITEYRESFRLFDKNGDGSITKKELRTVMFSLGKN), 133 to 168 (RTKADLQDMMNEVDLDGDGTIDFPEFLYLMAKNQGH), 187 to 222 (DQILEFREAFRVFDKNGDGYITVNELRTTMRSLGET), and 223 to 258 (QTKAELQDMINEADADGDGTISFSEFVCVMTGKMID). Residues aspartate 21, asparagine 23, aspartate 25, serine 27, glutamate 32, aspartate 57, aspartate 59, aspartate 61, threonine 63, glutamate 68, aspartate 110, asparagine 112, aspartate 114, serine 116, glutamate 121, aspartate 146, aspartate 148, aspartate 150, threonine 152, glutamate 157, aspartate 200, asparagine 202, aspartate 204, tyrosine 206, glutamate 211, aspartate 236, aspartate 238, aspartate 240, threonine 242, and glutamate 247 each contribute to the Ca(2+) site.

Belongs to the calmodulin family. Interacts with PID. Binds to ABCG36.

Functionally, potential calcium sensor that binds calcium in vitro. This chain is Calmodulin-like protein 12, found in Arabidopsis thaliana (Mouse-ear cress).